The chain runs to 93 residues: Aspartyl/glutamyl-tRNA(Asn/Gln) amidotransferase subunit C (93 aa).

The protein belongs to the GatC family. As to quaternary structure, heterotrimer of A, B and C subunits.

The catalysed reaction is L-glutamyl-tRNA(Gln) + L-glutamine + ATP + H2O = L-glutaminyl-tRNA(Gln) + L-glutamate + ADP + phosphate + H(+). It carries out the reaction L-aspartyl-tRNA(Asn) + L-glutamine + ATP + H2O = L-asparaginyl-tRNA(Asn) + L-glutamate + ADP + phosphate + 2 H(+). In terms of biological role, allows the formation of correctly charged Asn-tRNA(Asn) or Gln-tRNA(Gln) through the transamidation of misacylated Asp-tRNA(Asn) or Glu-tRNA(Gln) in organisms which lack either or both of asparaginyl-tRNA or glutaminyl-tRNA synthetases. The reaction takes place in the presence of glutamine and ATP through an activated phospho-Asp-tRNA(Asn) or phospho-Glu-tRNA(Gln). This is Aspartyl/glutamyl-tRNA(Asn/Gln) amidotransferase subunit C from Methanocella arvoryzae (strain DSM 22066 / NBRC 105507 / MRE50).